Consider the following 240-residue polypeptide: 4-hydroxy-tetrahydrodipicolinate reductase (240 aa).

NAD(+) is bound by residues 79 to 81 (ATT) and 103 to 106 (SANM). The active-site Proton donor/acceptor is H135. H136 lines the (S)-2,3,4,5-tetrahydrodipicolinate pocket. K139 (proton donor) is an active-site residue. 145 to 146 (GT) serves as a coordination point for (S)-2,3,4,5-tetrahydrodipicolinate.

The protein belongs to the DapB family.

It is found in the cytoplasm. The catalysed reaction is (S)-2,3,4,5-tetrahydrodipicolinate + NAD(+) + H2O = (2S,4S)-4-hydroxy-2,3,4,5-tetrahydrodipicolinate + NADH + H(+). The enzyme catalyses (S)-2,3,4,5-tetrahydrodipicolinate + NADP(+) + H2O = (2S,4S)-4-hydroxy-2,3,4,5-tetrahydrodipicolinate + NADPH + H(+). It functions in the pathway amino-acid biosynthesis; L-lysine biosynthesis via DAP pathway; (S)-tetrahydrodipicolinate from L-aspartate: step 4/4. Its function is as follows. Catalyzes the conversion of 4-hydroxy-tetrahydrodipicolinate (HTPA) to tetrahydrodipicolinate. This is 4-hydroxy-tetrahydrodipicolinate reductase from Staphylococcus aureus (strain USA300).